The following is a 772-amino-acid chain: Cadherin-19 (772 aa).

The N-terminal stretch at 1-21 (MNCYLLLRFMLGIPLLWPCLG) is a signal peptide. The propeptide occupies 22-43 (ATENSQTKKVKQPVRSHLRVKR). 5 Cadherin domains span residues 44-148 (GWVW…EPKF), 149-256 (LDEP…KPIF), 257-370 (KESL…PPLF), 371-470 (LLPY…APEF), and 470-581 (FSQY…STQT). The Extracellular segment spans residues 44-596 (GWVWNQFFVP…LVLSMGFKTE (553 aa)). Residues asparagine 57 and asparagine 74 are each glycosylated (N-linked (GlcNAc...) asparagine). Asparagine 419, asparagine 437, asparagine 508, asparagine 515, asparagine 516, and asparagine 534 each carry an N-linked (GlcNAc...) asparagine glycan. The chain crosses the membrane as a helical span at residues 597–617 (VIIAILICIMIIFGFIFLTLG). At 618–772 (LKQRRKQILF…MFGSAVQSNN (155 aa)) the chain is on the cytoplasmic side.

Expressed in many tissues, with the exception of uterus.

Its subcellular location is the cell membrane. In terms of biological role, cadherins are calcium-dependent cell adhesion proteins. They preferentially interact with themselves in a homophilic manner in connecting cells; cadherins may thus contribute to the sorting of heterogeneous cell types. This Homo sapiens (Human) protein is Cadherin-19 (CDH19).